The chain runs to 103 residues: Small ribosomal subunit protein uS10 (103 aa).

Belongs to the universal ribosomal protein uS10 family. As to quaternary structure, part of the 30S ribosomal subunit.

Its function is as follows. Involved in the binding of tRNA to the ribosomes. The chain is Small ribosomal subunit protein uS10 from Magnetococcus marinus (strain ATCC BAA-1437 / JCM 17883 / MC-1).